Here is a 262-residue protein sequence, read N- to C-terminus: Hydroxyethylthiazole kinase (262 aa).

Met50 lines the substrate pocket. ATP contacts are provided by Arg125 and Thr171. A substrate-binding site is contributed by Gly198.

The protein belongs to the Thz kinase family. Mg(2+) serves as cofactor.

It carries out the reaction 5-(2-hydroxyethyl)-4-methylthiazole + ATP = 4-methyl-5-(2-phosphooxyethyl)-thiazole + ADP + H(+). Its pathway is cofactor biosynthesis; thiamine diphosphate biosynthesis; 4-methyl-5-(2-phosphoethyl)-thiazole from 5-(2-hydroxyethyl)-4-methylthiazole: step 1/1. Functionally, catalyzes the phosphorylation of the hydroxyl group of 4-methyl-5-beta-hydroxyethylthiazole (THZ). This Shigella sonnei (strain Ss046) protein is Hydroxyethylthiazole kinase.